We begin with the raw amino-acid sequence, 445 residues long: Ubiquitin carboxyl-terminal hydrolase MINDY-3 (445 aa).

C51 (nucleophile) is an active-site residue. S125 bears the Phosphoserine mark. Catalysis depends on H287, which acts as the Proton acceptor.

It belongs to the MINDY deubiquitinase family. FAM188 subfamily. As to quaternary structure, interacts with COPS5. Widely expressed with high levels in heart, skeletal muscle, and kidney, and low levels in liver and brain. Also expressed in lung (at protein level).

Its subcellular location is the nucleus. It catalyses the reaction Thiol-dependent hydrolysis of ester, thioester, amide, peptide and isopeptide bonds formed by the C-terminal Gly of ubiquitin (a 76-residue protein attached to proteins as an intracellular targeting signal).. In terms of biological role, hydrolase that can remove 'Lys-48'-linked conjugated ubiquitin from proteins. The polypeptide is Ubiquitin carboxyl-terminal hydrolase MINDY-3 (Homo sapiens (Human)).